We begin with the raw amino-acid sequence, 654 residues long: DNA ligase (654 aa).

Residues 32 to 36 (DAVYD) and 81 to 82 (SL) each bind NAD(+). The active-site N6-AMP-lysine intermediate is the K112. R133, E167, and K306 together coordinate NAD(+). Residues C400, C403, C416, and C421 each coordinate Zn(2+). The 78-residue stretch at 577–654 (ESSSIFSHKT…EEELLKYLKE (78 aa)) folds into the BRCT domain.

The protein belongs to the NAD-dependent DNA ligase family. LigA subfamily. Requires Mg(2+) as cofactor. It depends on Mn(2+) as a cofactor.

The catalysed reaction is NAD(+) + (deoxyribonucleotide)n-3'-hydroxyl + 5'-phospho-(deoxyribonucleotide)m = (deoxyribonucleotide)n+m + AMP + beta-nicotinamide D-nucleotide.. Its function is as follows. DNA ligase that catalyzes the formation of phosphodiester linkages between 5'-phosphoryl and 3'-hydroxyl groups in double-stranded DNA using NAD as a coenzyme and as the energy source for the reaction. It is essential for DNA replication and repair of damaged DNA. The protein is DNA ligase of Helicobacter acinonychis (strain Sheeba).